A 291-amino-acid polypeptide reads, in one-letter code: MAITAALVKELRDKTGAGMMDAKKALTETDGDMEAAVDWLRTKGLAKAAKKSGRTAAEGLVGVAVADGAAVAVEVNSETDFVAKNAEFQAMVASFAEAALSASDLDALKGTEVGGKTVETILTDKIATIGENMTLRRMEKLSGETVVSYVHNAAADGMGKIGVLVALTGADNGIGKQIAMHIAAANPASLSEADLDPAVVEKERQVQIDIARESGKPEQVIEKMIVGRMKKFLSEVTLLGQAFVVNPDLTVGDAAKEAGVEITGFVRMEVGEGIEKVEEDFAAEVAKTMNG.

Residues 79-82 (TDFV) are involved in Mg(2+) ion dislocation from EF-Tu.

It belongs to the EF-Ts family.

Its subcellular location is the cytoplasm. Associates with the EF-Tu.GDP complex and induces the exchange of GDP to GTP. It remains bound to the aminoacyl-tRNA.EF-Tu.GTP complex up to the GTP hydrolysis stage on the ribosome. The polypeptide is Elongation factor Ts (Dinoroseobacter shibae (strain DSM 16493 / NCIMB 14021 / DFL 12)).